We begin with the raw amino-acid sequence, 1177 residues long: Putative ATP-dependent RNA helicase TDRD12 (1177 aa).

Residues 56 to 118 (TLEEGQVCVV…RVVVESFMQL (63 aa)) form the Tudor 1 domain. The Helicase ATP-binding domain occupies 447 to 635 (WPPIARGCDV…KEFMNDPYIV (189 aa)). 460–467 (SHCESNPL) lines the ATP pocket. Residues 574-577 (DEVE) carry the DEAH box motif. The region spanning 900–999 (IVDKHMDLYA…HTLPPQAVEF (100 aa)) is the Tudor 2 domain. The tract at residues 1098-1177 (EESLSQTPPR…VFKRWLSSNR (80 aa)) is disordered. The segment covering 1100–1115 (SLSQTPPRVTGTSPAQ) has biased composition (polar residues).

In terms of assembly, component of a mRNP complex containing PIWIL2, TDRD1 and piRNAs. Component of the PET complex, at least composed of EXD1, PIWIL2, TDRD12 and piRNAs.

It catalyses the reaction ATP + H2O = ADP + phosphate + H(+). Probable ATP-binding RNA helicase required during spermatogenesis to repress transposable elements and preventing their mobilization, which is essential for the germline integrity. Acts via the piRNA metabolic process, which mediates the repression of transposable elements during meiosis by forming complexes composed of piRNAs and Piwi proteins and governs the methylation and subsequent repression of transposons. Involved in the secondary piRNAs metabolic process. Acts via the PET complex, a multiprotein complex required during the secondary piRNAs metabolic process for the PIWIL2 slicing-triggered loading of PIWIL4 piRNAs. The protein is Putative ATP-dependent RNA helicase TDRD12 (TDRD12) of Homo sapiens (Human).